The sequence spans 741 residues: Linoleate 9S-lipoxygenase (741 aa).

In terms of domain architecture, PLAT spans 1 to 53 (IPGAFYIKNFMQVEFYLKSLTLEDIPNHGTIHFICNSWIYNSKVYKSDRIFFA). Residues 56-741 (TYLPSETPAP…SEEGLTFRGI (686 aa)) enclose the Lipoxygenase domain. The disordered stretch occupies residues 108–144 (ALARPVLGGSTLPYPRRGRTGRPKTKKDPNSEKPSDF). The span at 123–132 (RRGRTGRPKT) shows a compositional bias: basic residues. A compositionally biased stretch (basic and acidic residues) spans 133–144 (KKDPNSEKPSDF). Fe cation contacts are provided by His407, His412, His598, and Asn602.

It belongs to the lipoxygenase family. As to quaternary structure, monomer. Fe cation is required as a cofactor.

It localises to the cytoplasm. The enzyme catalyses (9Z,12Z)-octadecadienoate + O2 = (9S)-hydroperoxy-(10E,12Z)-octadecadienoate. It carries out the reaction (9Z,12Z)-octadecadienoate + O2 = (13S)-hydroperoxy-(9Z,11E)-octadecadienoate. The catalysed reaction is (9Z,12Z,15Z)-octadecatrienoate + O2 = (13S)-hydroperoxy-(9Z,11E,15Z)-octadecatrienoate. It functions in the pathway lipid metabolism; oxylipin biosynthesis. Its function is as follows. Plant lipoxygenase may be involved in a number of diverse aspects of plant physiology including growth and development, pest resistance, and senescence or responses to wounding. It catalyzes the hydroperoxidation of lipids containing a cis,cis-1,4-pentadiene structure. The chain is Linoleate 9S-lipoxygenase from Phaseolus vulgaris (Kidney bean).